The sequence spans 36 residues: uncharacterized protein (36 aa).

The protein localises to the mitochondrion. This is an uncharacterized protein from Saccharomyces cerevisiae (strain ATCC 204508 / S288c) (Baker's yeast).